Reading from the N-terminus, the 586-residue chain is Asparagine synthetase [glutamine-hydrolyzing] (586 aa).

Cysteine 2 acts as the For GATase activity in catalysis. One can recognise a Glutamine amidotransferase type-2 domain in the interval 2-185; the sequence is CGILAVLGVV…PGHLYSSKTG (184 aa). L-glutamine is bound by residues 50–54, 75–77, and aspartate 98; these read RLAII and NGE. The Asparagine synthetase domain maps to 193 to 516; that stretch reads PPWFSETVPS…PQDSARETVP (324 aa). ATP-binding positions include leucine 231, isoleucine 267, and 341–342; that span reads SG.

It carries out the reaction L-aspartate + L-glutamine + ATP + H2O = L-asparagine + L-glutamate + AMP + diphosphate + H(+). It functions in the pathway amino-acid biosynthesis; L-asparagine biosynthesis; L-asparagine from L-aspartate (L-Gln route): step 1/1. Functionally, essential for nitrogen assimilation, distribution and remobilization within the plant via the phloem. The chain is Asparagine synthetase [glutamine-hydrolyzing] (ASN1) from Zea mays (Maize).